Reading from the N-terminus, the 476-residue chain is 2-(3-amino-3-carboxypropyl)histidine synthase subunit 2 (476 aa).

A compositionally biased stretch (polar residues) spans 1-15 (MTESAPSAFFTTSTP). The segment at 1–24 (MTESAPSAFFTTSTPADHVHEEES) is disordered. [4Fe-4S] cluster-binding residues include Cys102, Cys123, and Cys347. Residues 451 to 476 (DGVSTAEDSTKMGEGRSGIAQGYSGK) are disordered.

The protein belongs to the DPH1/DPH2 family. DPH2 subfamily. Component of the 2-(3-amino-3-carboxypropyl)histidine synthase complex composed of dph-1, dph-2, dph-3 and a NADH-dependent reductase. Requires [4Fe-4S] cluster as cofactor.

Its pathway is protein modification; peptidyl-diphthamide biosynthesis. Its function is as follows. Required for the first step of diphthamide biosynthesis, a post-translational modification of histidine which occurs in elongation factor 2. Dph-1 and dph-2 transfer a 3-amino-3-carboxypropyl (ACP) group from S-adenosyl-L-methionine (SAM) to a histidine residue, the reaction is assisted by a reduction system comprising dph-3 and a NADH-dependent reductase. Facilitates the reduction of the catalytic iron-sulfur cluster found in the dph-1 subunit. In Caenorhabditis elegans, this protein is 2-(3-amino-3-carboxypropyl)histidine synthase subunit 2 (dph-2).